The sequence spans 77 residues: Large ribosomal subunit protein eL14 (77 aa).

This sequence belongs to the eukaryotic ribosomal protein eL14 family.

This is Large ribosomal subunit protein eL14 from Methanococcus maripaludis (strain C6 / ATCC BAA-1332).